The chain runs to 528 residues: Probable rhamnogalacturonate lyase A (528 aa).

The signal sequence occupies residues 1–20; the sequence is MLSRTILFSTSFLWVRVANA. Intrachain disulfides connect Cys-50–Cys-93 and Cys-184–Cys-193.

The protein belongs to the polysaccharide lyase 4 family.

It localises to the secreted. It carries out the reaction Endotype eliminative cleavage of L-alpha-rhamnopyranosyl-(1-&gt;4)-alpha-D-galactopyranosyluronic acid bonds of rhamnogalacturonan I domains in ramified hairy regions of pectin leaving L-rhamnopyranose at the reducing end and 4-deoxy-4,5-unsaturated D-galactopyranosyluronic acid at the non-reducing end.. Pectinolytic enzymes consist of four classes of enzymes: pectin lyase, polygalacturonase, pectin methylesterase and rhamnogalacturonase. Degrades the rhamnogalacturonan I (RG-I) backbone of pectin. This chain is Probable rhamnogalacturonate lyase A (rglA), found in Aspergillus flavus (strain ATCC 200026 / FGSC A1120 / IAM 13836 / NRRL 3357 / JCM 12722 / SRRC 167).